The following is a 57-amino-acid chain: Beta-defensin 3 (57 aa).

The residue at position 16 (glutamine 16) is a Pyrrolidone carboxylic acid. Cystine bridges form between cysteine 24–cysteine 53, cysteine 31–cysteine 46, and cysteine 36–cysteine 54.

This sequence belongs to the beta-defensin family. As to expression, neutrophilic granules.

It localises to the secreted. Has bactericidal activity. Active against E.coli ML35 and S.aureus 502A. This is Beta-defensin 3 (DEFB3) from Bos taurus (Bovine).